Consider the following 971-residue polypeptide: uncharacterized protein (971 aa).

13 helical membrane passes run 11–31, 516–536, 547–567, 569–589, 615–635, 651–671, 727–747, 763–783, 795–815, 817–837, 878–898, 900–920, and 923–943; these read WLLK…GIIF, FASS…ALGI, LALA…GGVV, VFSF…LITL, FFTM…VIYL, AITS…LFVS, LLFI…LYLG, STGI…YSLP, IALI…NFIF, IDQS…FFQA, IGSS…FGGI, GTIN…SVFV, and LPLF…YVQI.

The protein resides in the cell membrane. This is an uncharacterized protein from Mycoplasma pneumoniae (strain ATCC 29342 / M129 / Subtype 1) (Mycoplasmoides pneumoniae).